A 932-amino-acid chain; its full sequence is MAVVIRLQGLPIVAGTMDIRHFFSGLTIPDGGVHIVGGELGEAFIVFATDEDARLGMMRTGGTIKGSKVTLLLSSKTEMQNMIELSRRRFETANLDIPPANASRSGPPPSSGMSSRVNLPTTVSNFNNPSPSVVTATTSVHESNKNIQTFSTASVGTAPPNMGASFGSPTFSSTVPSTASPMNTVPPPPIPPIPAMPSLPPMPSIPPIPVPPPVPTLPPVPPVPPIPPVPSVPPMTPLPPMSGMPPLNPPPVAPLPAGMNGSGAPMNLNNNLNPMFLGPLNPVNPIQMNSQSSVKPLPINPDDLYVSVHGMPFSAMENDVRDFFHGLRVDAVHLLKDHVGRNNGNGLVKFLSPQDTFEALKRNRMLMIQRYVEVSPATERQWVAAGGHITFKQNMGPSGQTHPPPQTLPRSKSPSGQKRSRSRSPHEAGFCVYLKGLPFEAENKHVIDFFKKLDIVEDSIYIAYGPNGKATGEGFVEFRNEADYKAALCRHKQYMGNRFIQVHPITKKGMLEKIDMIRKRLQNFSYDQREMILNPEGDVNSAKVCAHITNIPFSITKMDVLQFLEGIPVDENAVHVLVDNNGQGLGQALVQFKNEDDARKSERLHRKKLNGREAFVHVVTLEDMREIEKNPPAQGKKGLKMPVPGNPAVPGMPNAGLPGVGLPSAGLPGAGLPSTGLPGSAITSAGLPGAGMPSAGIPSAGGEEHAFLTVGSKEANNGPPFNFPGNFGGSNAFGPPIPPPGLGGGAFGDARPGMPSVGNSGLPGLGLDVPGFGGGPNNLSGPSGFGGGPQNFGNGPGSLGGPPGFGSGPPGLGSAPGHLGGPPAFGPGPGPGPGPGPIHIGGPPGFASSSGKPGPTVIKVQNMPFTVSIDEILDFFYGYQVIPGSVCLKYNEKGMPTGEAMVAFESRDEATAAVIDLNDRPIGSRKVKLVLG.

The interval 96–116 (DIPPANASRSGPPPSSGMSSR) is disordered. Residues 98–116 (PPANASRSGPPPSSGMSSR) show a composition bias toward low complexity. The 76-residue stretch at 304-379 (LYVSVHGMPF…RYVEVSPATE (76 aa)) folds into the RRM 1 domain. Residues Ser-352 and Ser-375 each carry the phosphoserine modification. Composition is skewed to polar residues over residues 392–401 (KQNMGPSGQT) and 408–417 (LPRSKSPSGQ). The segment at 392 to 424 (KQNMGPSGQTHPPPQTLPRSKSPSGQKRSRSRS) is disordered. Residues Ser-420, Ser-422, and Ser-424 each carry the phosphoserine modification. In terms of domain architecture, RRM 2 spans 430–507 (FCVYLKGLPF…RFIQVHPITK (78 aa)). Phosphoserine is present on Ser-525. Positions 717 to 734 (NGPPFNFPGNFGGSNAFG) are enriched in low complexity. Residues 717–853 (NGPPFNFPGN…PGFASSSGKP (137 aa)) form a disordered region. The span at 783-811 (SGFGGGPQNFGNGPGSLGGPPGFGSGPPG) shows a compositional bias: gly residues. Residues 824–836 (AFGPGPGPGPGPG) are compositionally biased toward pro residues. The 77-residue stretch at 856-932 (TVIKVQNMPF…GSRKVKLVLG (77 aa)) folds into the RRM 3 domain.

It is found in the nucleus. The polypeptide is RNA-binding protein 12 (RBM12) (Homo sapiens (Human)).